The following is a 422-amino-acid chain: Acyl-[acyl-carrier-protein] desaturase 6, chloroplastic (422 aa).

The N-terminal 46 residues, 1-46, are a transit peptide targeting the chloroplast; sequence MAATATMAMPLANRLRCKPNTNSSSPSRTLFGRRVTMISSSRWMCR. Fe cation-binding residues include E154, E192, H195, E245, E280, and H283.

This sequence belongs to the fatty acid desaturase type 2 family. As to quaternary structure, homodimer. It depends on Fe(2+) as a cofactor.

The protein resides in the plastid. It is found in the chloroplast. The protein operates within lipid metabolism; fatty acid metabolism. Functionally, introduces a cis double bond in the acyl chain of an acyl-[acyl-carrier protein]. This Oryza sativa subsp. indica (Rice) protein is Acyl-[acyl-carrier-protein] desaturase 6, chloroplastic.